The following is a 558-amino-acid chain: 2-isopropylmalate synthase (558 aa).

Positions P30–N303 constitute a Pyruvate carboxyltransferase domain. The Mg(2+) site is built by D39, H242, H244, and N278. The interval Q437–R558 is regulatory domain.

This sequence belongs to the alpha-IPM synthase/homocitrate synthase family. LeuA type 2 subfamily. As to quaternary structure, homodimer. It depends on Mg(2+) as a cofactor.

The protein resides in the cytoplasm. It catalyses the reaction 3-methyl-2-oxobutanoate + acetyl-CoA + H2O = (2S)-2-isopropylmalate + CoA + H(+). Its pathway is amino-acid biosynthesis; L-leucine biosynthesis; L-leucine from 3-methyl-2-oxobutanoate: step 1/4. Catalyzes the condensation of the acetyl group of acetyl-CoA with 3-methyl-2-oxobutanoate (2-ketoisovalerate) to form 3-carboxy-3-hydroxy-4-methylpentanoate (2-isopropylmalate). The sequence is that of 2-isopropylmalate synthase from Mesorhizobium japonicum (strain LMG 29417 / CECT 9101 / MAFF 303099) (Mesorhizobium loti (strain MAFF 303099)).